We begin with the raw amino-acid sequence, 211 residues long: N-(5'-phosphoribosyl)anthranilate isomerase (211 aa).

This sequence belongs to the TrpF family.

The catalysed reaction is N-(5-phospho-beta-D-ribosyl)anthranilate = 1-(2-carboxyphenylamino)-1-deoxy-D-ribulose 5-phosphate. It participates in amino-acid biosynthesis; L-tryptophan biosynthesis; L-tryptophan from chorismate: step 3/5. The sequence is that of N-(5'-phosphoribosyl)anthranilate isomerase from Desulfovibrio desulfuricans (strain ATCC 27774 / DSM 6949 / MB).